Reading from the N-terminus, the 132-residue chain is MVMSDPIADLLTRIRNANVVRHEVVEVPSSNIKKAIANIMLTEGYIRDLEEYRDGSVDMLRITMKYGQNKERIITGLKRISKPGLRVYCRKDETPKVLNGLGVAVVSTSKGIVTDREARKLGVGGEVLCYIW.

The protein belongs to the universal ribosomal protein uS8 family. As to quaternary structure, part of the 30S ribosomal subunit. Contacts proteins S5 and S12.

In terms of biological role, one of the primary rRNA binding proteins, it binds directly to 16S rRNA central domain where it helps coordinate assembly of the platform of the 30S subunit. This Clostridium botulinum (strain ATCC 19397 / Type A) protein is Small ribosomal subunit protein uS8.